A 122-amino-acid chain; its full sequence is Large ribosomal subunit protein uL14c (122 aa).

It belongs to the universal ribosomal protein uL14 family. As to quaternary structure, part of the 50S ribosomal subunit.

The protein resides in the plastid. The protein localises to the chloroplast. Functionally, binds to 23S rRNA. The chain is Large ribosomal subunit protein uL14c from Chloranthus spicatus (Chulantree).